Consider the following 640-residue polypeptide: Antigenic protein NP1 (640 aa).

In terms of domain architecture, Peptidase M60 spans 1-288; the sequence is VQVSIGKCNH…SYVNIAHAFG (288 aa). Residues 463–615 form the PA14 domain; it reads LDPHQVEYEV…TDQSSVNVSK (153 aa).

The chain is Antigenic protein NP1 from Entamoeba histolytica.